Reading from the N-terminus, the 400-residue chain is Formate-dependent phosphoribosylglycinamide formyltransferase (400 aa).

N(1)-(5-phospho-beta-D-ribosyl)glycinamide-binding positions include 22–23 (EL) and Glu82. ATP-binding positions include Arg115, Lys157, 162-167 (SSGKGQ), 197-200 (EGFV), and Glu205. Positions 120 to 315 (RLAAETLGLP…EFELHARAIL (196 aa)) constitute an ATP-grasp domain. Positions 274 and 286 each coordinate Mg(2+). N(1)-(5-phospho-beta-D-ribosyl)glycinamide-binding positions include Asp293, Lys362, and 369–370 (RR).

It belongs to the PurK/PurT family. Homodimer.

It catalyses the reaction N(1)-(5-phospho-beta-D-ribosyl)glycinamide + formate + ATP = N(2)-formyl-N(1)-(5-phospho-beta-D-ribosyl)glycinamide + ADP + phosphate + H(+). Its pathway is purine metabolism; IMP biosynthesis via de novo pathway; N(2)-formyl-N(1)-(5-phospho-D-ribosyl)glycinamide from N(1)-(5-phospho-D-ribosyl)glycinamide (formate route): step 1/1. In terms of biological role, involved in the de novo purine biosynthesis. Catalyzes the transfer of formate to 5-phospho-ribosyl-glycinamide (GAR), producing 5-phospho-ribosyl-N-formylglycinamide (FGAR). Formate is provided by PurU via hydrolysis of 10-formyl-tetrahydrofolate. The polypeptide is Formate-dependent phosphoribosylglycinamide formyltransferase (Mycolicibacterium gilvum (strain PYR-GCK) (Mycobacterium gilvum (strain PYR-GCK))).